The following is a 37-amino-acid chain: Large ribosomal subunit protein bL36c (37 aa).

This sequence belongs to the bacterial ribosomal protein bL36 family.

It localises to the plastid. Its subcellular location is the chloroplast. In Mesembryanthemum crystallinum (Common ice plant), this protein is Large ribosomal subunit protein bL36c.